We begin with the raw amino-acid sequence, 312 residues long: Ribosomal protein L11 methyltransferase (312 aa).

Positions 162, 183, 205, and 248 each coordinate S-adenosyl-L-methionine.

Belongs to the methyltransferase superfamily. PrmA family.

The protein localises to the cytoplasm. The catalysed reaction is L-lysyl-[protein] + 3 S-adenosyl-L-methionine = N(6),N(6),N(6)-trimethyl-L-lysyl-[protein] + 3 S-adenosyl-L-homocysteine + 3 H(+). Its function is as follows. Methylates ribosomal protein L11. This Bacillus anthracis (strain A0248) protein is Ribosomal protein L11 methyltransferase.